The chain runs to 168 residues: Cilia- and flagella-associated protein 276 (168 aa).

Disordered regions lie at residues Ala-35–Phe-61 and His-149–Thr-168. The span at Ala-38–Ser-55 shows a compositional bias: polar residues.

As to quaternary structure, microtubule inner protein component of sperm flagellar doublet microtubules. Predominantly expressed in nervous system tissues, such as the spinal cord, cerebrum, cerebellum, and sciatic nerve.

It localises to the cytoplasm. Its subcellular location is the cytoskeleton. It is found in the cilium axoneme. The protein localises to the flagellum axoneme. In terms of biological role, microtubule inner protein (MIP) part of the dynein-decorated doublet microtubules (DMTs) in cilia axoneme, which is required for motile cilia beating. May play an important role for the maintenance of myelin-axon integrity. May affect intracellular Ca(2+) homeostasis. The protein is Cilia- and flagella-associated protein 276 of Mus musculus (Mouse).